The chain runs to 338 residues: Popeye domain-containing protein 1 (338 aa).

Over 1–40 (MATESILITTLPMDLNSQINNVTFGLNENETLCENWREIH) the chain is Extracellular. Residues Asn-21 and Asn-29 are each glycosylated (N-linked (GlcNAc...) asparagine). Residues 41 to 61 (HLVFHLANTCFAAGLVIPSTL) traverse the membrane as a helical segment. Over 62–65 (NLHM) the chain is Cytoplasmic. Residues 66 to 86 (ILLRGMLCLGCIFFIIWAILF) traverse the membrane as a helical segment. Residues 87 to 91 (RCALD) are Extracellular-facing. The chain crosses the membrane as a helical span at residues 92-112 (IMIWNATFLSMNFMHFIYLVY). Topologically, residues 113 to 338 (KKRPIKIEKD…VGPLSHAVFC (226 aa)) are cytoplasmic.

It belongs to the popeye family.

The protein resides in the lateral cell membrane. The protein localises to the cell junction. It localises to the tight junction. It is found in the membrane. Its subcellular location is the cell membrane. The protein resides in the sarcolemma. The protein localises to the caveola. Its function is as follows. Cell adhesion molecule involved in the establishment and/or maintenance of cell integrity. May play a role in vamp3-mediated vesicular transport and recycling of different receptor molecules. May be involved in the formation and regulation of the tight junction (TJ) paracellular permeability barrier in epithelial cells. May induce primordial adhesive contact and aggregation of epithelial cells in a Ca(2+)-independent manner. May be involved in epithelial movement during corneal sheet formation and regeneration. May play a role in the regulation of cell shape and movement by modulating the Rho-GTPase activity. May be involved in skeletal muscle and heart development as well as in the maintenance of heart function. May also be involved in striated muscle regeneration and in the regulation of cell spreading. The polypeptide is Popeye domain-containing protein 1 (popdc1) (Xenopus tropicalis (Western clawed frog)).